Here is a 165-residue protein sequence, read N- to C-terminus: Urease accessory protein UreE (165 aa).

Belongs to the UreE family.

It is found in the cytoplasm. In terms of biological role, involved in urease metallocenter assembly. Binds nickel. Probably functions as a nickel donor during metallocenter assembly. The chain is Urease accessory protein UreE from Flavobacterium johnsoniae (strain ATCC 17061 / DSM 2064 / JCM 8514 / BCRC 14874 / CCUG 350202 / NBRC 14942 / NCIMB 11054 / UW101) (Cytophaga johnsonae).